The following is an 82-amino-acid chain: Small ribosomal subunit protein bS18 (82 aa).

Residues 1 to 21 are disordered; it reads MKRNNSKKVRVEPTRRPKKNP.

It belongs to the bacterial ribosomal protein bS18 family. In terms of assembly, part of the 30S ribosomal subunit. Forms a tight heterodimer with protein bS6.

Binds as a heterodimer with protein bS6 to the central domain of the 16S rRNA, where it helps stabilize the platform of the 30S subunit. The chain is Small ribosomal subunit protein bS18 from Corynebacterium kroppenstedtii (strain DSM 44385 / JCM 11950 / CIP 105744 / CCUG 35717).